Consider the following 303-residue polypeptide: Formylglycine-generating enzyme (303 aa).

Residues asparagine 188, isoleucine 189, aspartate 202, tyrosine 204, asparagine 222, valine 223, glycine 225, and valine 227 each coordinate Ca(2+). Cysteine 269 and cysteine 274 together coordinate Cu(+).

It belongs to the sulfatase-modifying factor family. Cu(+) serves as cofactor.

The enzyme catalyses L-cysteinyl-[sulfatase] + 2 a thiol + O2 = an organic disulfide + 3-oxo-L-alanyl-[sulfatase] + hydrogen sulfide + H2O + H(+). The protein operates within protein modification; sulfatase oxidation. Oxidase that catalyzes the conversion of cysteine to 3-oxoalanine on target proteins. 3-oxoalanine modification, which is also named formylglycine (fGly), occurs in the maturation of arylsulfatases and some alkaline phosphatases that use the hydrated form of 3-oxoalanine as a catalytic nucleophile. The polypeptide is Formylglycine-generating enzyme (Thermomonospora curvata (strain ATCC 19995 / DSM 43183 / JCM 3096 / KCTC 9072 / NBRC 15933 / NCIMB 10081 / Henssen B9)).